A 354-amino-acid polypeptide reads, in one-letter code: Phosphate acyltransferase (354 aa).

This sequence belongs to the PlsX family. In terms of assembly, homodimer. Probably interacts with PlsY.

The protein localises to the cytoplasm. It catalyses the reaction a fatty acyl-[ACP] + phosphate = an acyl phosphate + holo-[ACP]. Its pathway is lipid metabolism; phospholipid metabolism. Catalyzes the reversible formation of acyl-phosphate (acyl-PO(4)) from acyl-[acyl-carrier-protein] (acyl-ACP). This enzyme utilizes acyl-ACP as fatty acyl donor, but not acyl-CoA. This is Phosphate acyltransferase from Nitrobacter hamburgensis (strain DSM 10229 / NCIMB 13809 / X14).